A 931-amino-acid polypeptide reads, in one-letter code: Protocadherin gamma-A5 (931 aa).

The N-terminal stretch at 1–29 (MASPPRGWGCGELLLPFMLLGTLCEPGSG) is a signal peptide. 6 consecutive Cadherin domains span residues 30–133 (QIRY…FPRF), 134–242 (RDEE…APLF), 243–347 (TPSE…APEV), 348–452 (ILTS…PPNF), 453–562 (PQAS…TPEI), and 570–683 (DGST…TPID). Residues 30-692 (QIRYSMPEEL…DPEDLDLTLY (663 aa)) are Extracellular-facing. N-linked (GlcNAc...) asparagine glycans are attached at residues Asn-419 and Asn-545. Residues 693-713 (LVVAVAAVSCVFLAFVIVLLV) traverse the membrane as a helical segment. The Cytoplasmic portion of the chain corresponds to 714 to 931 (LRLRRWHKSR…KKKSGKKEKK (218 aa)). 2 disordered regions span residues 800–840 (NKEE…WPNN) and 901–931 (ATLT…KEKK). Residues 809–840 (APPNTDWRFSQAQRPGTSGSQNGDDTGTWPNN) show a composition bias toward polar residues. Residues 921-931 (NKKKSGKKEKK) show a composition bias toward basic residues.

The protein resides in the cell membrane. In terms of biological role, potential calcium-dependent cell-adhesion protein. May be involved in the establishment and maintenance of specific neuronal connections in the brain. The protein is Protocadherin gamma-A5 (PCDHGA5) of Homo sapiens (Human).